Reading from the N-terminus, the 924-residue chain is Lon protease homolog 3, mitochondrial (924 aa).

The transit peptide at 1–63 (MMPKRFNTSG…PVQSLLLFRA (63 aa)) directs the protein to the mitochondrion. In terms of domain architecture, Lon N-terminal spans 112–325 (VIALPLPHKP…LTLELVKKQV (214 aa)). Residue 447-454 (GPPGVGKT) participates in ATP binding. Positions 738 to 922 (QTPVGVVMGL…EKIFDLAFNY (185 aa)) constitute a Lon proteolytic domain. Catalysis depends on residues Ser828 and Lys871.

Belongs to the peptidase S16 family. In terms of assembly, homohexamer or homoheptamer. Organized in a ring with a central cavity.

It is found in the mitochondrion matrix. It catalyses the reaction Hydrolysis of proteins in presence of ATP.. In terms of biological role, ATP-dependent serine protease that mediates the selective degradation of misfolded, unassembled or oxidatively damaged polypeptides as well as certain short-lived regulatory proteins in the mitochondrial matrix. May also have a chaperone function in the assembly of inner membrane protein complexes. Participates in the regulation of mitochondrial gene expression and in the maintenance of the integrity of the mitochondrial genome. Binds to mitochondrial DNA in a site-specific manner. The polypeptide is Lon protease homolog 3, mitochondrial (LON3) (Arabidopsis thaliana (Mouse-ear cress)).